The primary structure comprises 179 residues: Large ribosomal subunit protein uL5 (179 aa).

The protein belongs to the universal ribosomal protein uL5 family. As to quaternary structure, part of the 50S ribosomal subunit; part of the 5S rRNA/L5/L18/L25 subcomplex. Contacts the 5S rRNA and the P site tRNA. Forms a bridge to the 30S subunit in the 70S ribosome.

Functionally, this is one of the proteins that bind and probably mediate the attachment of the 5S RNA into the large ribosomal subunit, where it forms part of the central protuberance. In the 70S ribosome it contacts protein S13 of the 30S subunit (bridge B1b), connecting the 2 subunits; this bridge is implicated in subunit movement. Contacts the P site tRNA; the 5S rRNA and some of its associated proteins might help stabilize positioning of ribosome-bound tRNAs. In Nitratidesulfovibrio vulgaris (strain DSM 19637 / Miyazaki F) (Desulfovibrio vulgaris), this protein is Large ribosomal subunit protein uL5.